The primary structure comprises 88 residues: Small ribosomal subunit protein bS20 (88 aa).

Residues 1–22 (MANTPSAKKAVNKIAKRTQVNK) form a disordered region.

This sequence belongs to the bacterial ribosomal protein bS20 family.

Binds directly to 16S ribosomal RNA. The chain is Small ribosomal subunit protein bS20 from Bartonella bacilliformis (strain ATCC 35685 / KC583 / Herrer 020/F12,63).